A 107-amino-acid polypeptide reads, in one-letter code: Ribosome-associated factor Y (107 aa).

The disordered stretch occupies residues 85 to 107 (LNKLQHKSESRRADERLKDSFEN).

In terms of assembly, associates mainly with 70S ribosomes.

Its function is as follows. During stationary phase, prevents 70S dimer formation, probably in order to regulate translation efficiency during transition between the exponential and the stationary phases. In addition, during environmental stress such as cold shock or excessive cell density at stationary phase, stabilizes the 70S ribosome against dissociation, inhibits translation initiation and increase translation accuracy. When normal growth conditions are restored, is quickly released from the ribosome. This chain is Ribosome-associated factor Y, found in Haemophilus influenzae (strain ATCC 51907 / DSM 11121 / KW20 / Rd).